Consider the following 185-residue polypeptide: Ribosome-recycling factor (185 aa).

Belongs to the RRF family.

The protein resides in the cytoplasm. Its function is as follows. Responsible for the release of ribosomes from messenger RNA at the termination of protein biosynthesis. May increase the efficiency of translation by recycling ribosomes from one round of translation to another. The sequence is that of Ribosome-recycling factor from Actinobacillus succinogenes (strain ATCC 55618 / DSM 22257 / CCUG 43843 / 130Z).